Here is an 83-residue protein sequence, read N- to C-terminus: Small ribosomal subunit protein bS16 (83 aa).

Belongs to the bacterial ribosomal protein bS16 family.

The polypeptide is Small ribosomal subunit protein bS16 (Magnetococcus marinus (strain ATCC BAA-1437 / JCM 17883 / MC-1)).